A 1024-amino-acid chain; its full sequence is Error-prone DNA polymerase (1024 aa).

This sequence belongs to the DNA polymerase type-C family. DnaE2 subfamily.

It localises to the cytoplasm. The enzyme catalyses DNA(n) + a 2'-deoxyribonucleoside 5'-triphosphate = DNA(n+1) + diphosphate. Functionally, DNA polymerase involved in damage-induced mutagenesis and translesion synthesis (TLS). It is not the major replicative DNA polymerase. The polypeptide is Error-prone DNA polymerase (Pseudomonas paraeruginosa (strain DSM 24068 / PA7) (Pseudomonas aeruginosa (strain PA7))).